The following is a 370-amino-acid chain: UDP-N-acetylglucosamine--N-acetylmuramyl-(pentapeptide) pyrophosphoryl-undecaprenol N-acetylglucosamine transferase (370 aa).

Residues 10–12, N124, S196, I253, and Q298 contribute to the UDP-N-acetyl-alpha-D-glucosamine site; that span reads TGG.

Belongs to the glycosyltransferase 28 family. MurG subfamily.

It is found in the cell membrane. The catalysed reaction is Mur2Ac(oyl-L-Ala-gamma-D-Glu-L-Lys-D-Ala-D-Ala)-di-trans,octa-cis-undecaprenyl diphosphate + UDP-N-acetyl-alpha-D-glucosamine = beta-D-GlcNAc-(1-&gt;4)-Mur2Ac(oyl-L-Ala-gamma-D-Glu-L-Lys-D-Ala-D-Ala)-di-trans,octa-cis-undecaprenyl diphosphate + UDP + H(+). The protein operates within cell wall biogenesis; peptidoglycan biosynthesis. In terms of biological role, cell wall formation. Catalyzes the transfer of a GlcNAc subunit on undecaprenyl-pyrophosphoryl-MurNAc-pentapeptide (lipid intermediate I) to form undecaprenyl-pyrophosphoryl-MurNAc-(pentapeptide)GlcNAc (lipid intermediate II). This is UDP-N-acetylglucosamine--N-acetylmuramyl-(pentapeptide) pyrophosphoryl-undecaprenol N-acetylglucosamine transferase from Limosilactobacillus reuteri subsp. reuteri (strain JCM 1112) (Lactobacillus reuteri).